A 306-amino-acid chain; its full sequence is Glutaminase (306 aa).

Residues S61, N111, E155, N162, Y186, Y238, and V256 each contribute to the substrate site.

The protein belongs to the glutaminase family. In terms of assembly, homotetramer.

The enzyme catalyses L-glutamine + H2O = L-glutamate + NH4(+). The sequence is that of Glutaminase from Pseudomonas entomophila (strain L48).